Reading from the N-terminus, the 1025-residue chain is Multidrug resistance protein MdtC (1025 aa).

The next 12 helical transmembrane spans lie at Phe3–Leu23, Glu333–Leu353, Ile360–Cys380, Leu387–Leu407, Val431–Leu451, Phe463–Pro483, Leu528–Pro548, Val853–Ser873, Val875–Leu895, Leu897–Val917, Pro953–Gly973, and Ile984–Val1004.

The protein belongs to the resistance-nodulation-cell division (RND) (TC 2.A.6) family. MdtC subfamily. In terms of assembly, part of a tripartite efflux system composed of MdtA, MdtB and MdtC. MdtC forms a heteromultimer with MdtB.

The protein resides in the cell inner membrane. Its function is as follows. The MdtABC tripartite complex confers resistance against novobiocin and deoxycholate. In Escherichia coli (strain UTI89 / UPEC), this protein is Multidrug resistance protein MdtC.